The chain runs to 250 residues: Ubiquinone/menaquinone biosynthesis C-methyltransferase UbiE (250 aa).

S-adenosyl-L-methionine contacts are provided by residues Thr73, Asp94, 122–123, and Ser139; that span reads NA.

It belongs to the class I-like SAM-binding methyltransferase superfamily. MenG/UbiE family.

It carries out the reaction a 2-demethylmenaquinol + S-adenosyl-L-methionine = a menaquinol + S-adenosyl-L-homocysteine + H(+). It catalyses the reaction a 2-methoxy-6-(all-trans-polyprenyl)benzene-1,4-diol + S-adenosyl-L-methionine = a 5-methoxy-2-methyl-3-(all-trans-polyprenyl)benzene-1,4-diol + S-adenosyl-L-homocysteine + H(+). Its pathway is quinol/quinone metabolism; menaquinone biosynthesis; menaquinol from 1,4-dihydroxy-2-naphthoate: step 2/2. The protein operates within cofactor biosynthesis; ubiquinone biosynthesis. Functionally, methyltransferase required for the conversion of demethylmenaquinol (DMKH2) to menaquinol (MKH2) and the conversion of 2-polyprenyl-6-methoxy-1,4-benzoquinol (DDMQH2) to 2-polyprenyl-3-methyl-6-methoxy-1,4-benzoquinol (DMQH2). The sequence is that of Ubiquinone/menaquinone biosynthesis C-methyltransferase UbiE from Francisella tularensis subsp. mediasiatica (strain FSC147).